Reading from the N-terminus, the 207-residue chain is MATVDGTTAPSSGGKTATVALESGGGRYGGPAPAKCSGANLALRALLFAVSLSALVVLVTAKQTVMVPFVIRPPQFILAPVPAKYTHSPALIYLLAALCATCFYSLITAISSVRLLSSSACSAKTLFYLILLDVFYAAVMASATGTAGAVAWVGLKGNSHTRWNKICNVYGKFCRHIGSSTFLALIAAIVLVLLAFLNAYSLYRRSR.

Residues 1 to 40 (MATVDGTTAPSSGGKTATVALESGGGRYGGPAPAKCSGAN) lie on the Cytoplasmic side of the membrane. The helical transmembrane segment at 41 to 61 (LALRALLFAVSLSALVVLVTA) threads the bilayer. The Extracellular portion of the chain corresponds to 62–89 (KQTVMVPFVIRPPQFILAPVPAKYTHSP). Residues 90–110 (ALIYLLAALCATCFYSLITAI) traverse the membrane as a helical segment. Residues 111 to 124 (SSVRLLSSSACSAK) lie on the Cytoplasmic side of the membrane. A helical membrane pass occupies residues 125-145 (TLFYLILLDVFYAAVMASATG). Over 146-176 (TAGAVAWVGLKGNSHTRWNKICNVYGKFCRH) the chain is Extracellular. Residues 177–197 (IGSSTFLALIAAIVLVLLAFL) traverse the membrane as a helical segment. Residues 198–207 (NAYSLYRRSR) lie on the Cytoplasmic side of the membrane.

The protein belongs to the Casparian strip membrane proteins (CASP) family. Homodimer and heterodimers.

Its subcellular location is the cell membrane. In Oryza sativa subsp. japonica (Rice), this protein is CASP-like protein 1D1.